A 681-amino-acid polypeptide reads, in one-letter code: UvrABC system protein C (681 aa).

One can recognise a GIY-YIG domain in the interval 16–95; that stretch reads DSPGVYKFRD…IKEYDPRFNV (80 aa). A UVR domain is found at 208-243; that stretch reads GTYIRRLERQMTDAAEEMEYEKAARLRDDIGALKKA. The disordered stretch occupies residues 650-681; it reads EIMEDEEPGTTAGSSQEPVSAGTSDERRGQET. Over residues 660-672 the composition is skewed to polar residues; sequence TAGSSQEPVSAGT.

This sequence belongs to the UvrC family. Interacts with UvrB in an incision complex.

It is found in the cytoplasm. Functionally, the UvrABC repair system catalyzes the recognition and processing of DNA lesions. UvrC both incises the 5' and 3' sides of the lesion. The N-terminal half is responsible for the 3' incision and the C-terminal half is responsible for the 5' incision. The chain is UvrABC system protein C from Streptomyces avermitilis (strain ATCC 31267 / DSM 46492 / JCM 5070 / NBRC 14893 / NCIMB 12804 / NRRL 8165 / MA-4680).